A 271-amino-acid polypeptide reads, in one-letter code: Phosphate import ATP-binding protein PstB 3 (271 aa).

Residues 20–266 form the ABC transporter domain; that stretch reads LRVEGLGFYY…PQETQTRDYV (247 aa). 52–59 provides a ligand contact to ATP; the sequence is GPSGCGKS.

Belongs to the ABC transporter superfamily. Phosphate importer (TC 3.A.1.7) family. As to quaternary structure, the complex is composed of two ATP-binding proteins (PstB), two transmembrane proteins (PstC and PstA) and a solute-binding protein (PstS).

Its subcellular location is the cell inner membrane. The catalysed reaction is phosphate(out) + ATP + H2O = ADP + 2 phosphate(in) + H(+). Its function is as follows. Part of the ABC transporter complex PstSACB involved in phosphate import. Responsible for energy coupling to the transport system. This is Phosphate import ATP-binding protein PstB 3 from Synechocystis sp. (strain ATCC 27184 / PCC 6803 / Kazusa).